An 81-amino-acid polypeptide reads, in one-letter code: Putative defensin-like protein 102 (81 aa).

A signal peptide spans 1 to 24 (MTTTMKTFVAFVLTVFFIMSSAHC). 4 cysteine pairs are disulfide-bonded: Cys-43-Cys-78, Cys-49-Cys-71, Cys-57-Cys-76, and Cys-61-Cys-77.

Belongs to the DEFL family.

The protein resides in the secreted. The polypeptide is Putative defensin-like protein 102 (Arabidopsis thaliana (Mouse-ear cress)).